A 508-amino-acid chain; its full sequence is Aromatase (508 aa).

Position 437 (C437) interacts with heme.

This sequence belongs to the cytochrome P450 family. It depends on heme as a cofactor.

Its subcellular location is the membrane. The enzyme catalyses testosterone + 3 reduced [NADPH--hemoprotein reductase] + 3 O2 = 17beta-estradiol + formate + 3 oxidized [NADPH--hemoprotein reductase] + 4 H2O + 4 H(+). It carries out the reaction androst-4-ene-3,17-dione + 3 reduced [NADPH--hemoprotein reductase] + 3 O2 = estrone + formate + 3 oxidized [NADPH--hemoprotein reductase] + 4 H2O + 4 H(+). Catalyzes the formation of aromatic C18 estrogens from C19 androgens. In Rattus norvegicus (Rat), this protein is Aromatase (Cyp19a1).